The chain runs to 257 residues: Gamma-secretase subunit APH-1B (257 aa).

The next 7 membrane-spanning stretches (helical) occupy residues 5–25, 32–52, 70–90, 115–135, 158–178, 186–206, and 213–233; these read VFFGCAFIAFGPALALYVFTI, IIFLIAGAFFWLVSLLISSLV, YLLIFGTFVSVYIQEMFRFAY, LLAYVSGLGFGIMSGVFSFVN, YSAFMTLVIILLHVFWGIVFF, WGILLIVLLTHLLVSAQTFIS, and LASAFIILVLMGTWAFLAAGG.

This sequence belongs to the APH-1 family. As to quaternary structure, probable component of the gamma-secretase complex, a complex composed of a presenilin homodimer (PSEN1 or PSEN2), nicastrin (NCSTN), APH1 (APH1A or APH1B) and PEN2. Such minimal complex is sufficient for secretase activity, although other components may exist. Interacts with PSEN1 and PSEN2.

The protein resides in the membrane. Its function is as follows. Probable subunit of the gamma-secretase complex, an endoprotease complex that catalyzes the intramembrane cleavage of integral proteins such as Notch receptors and APP (amyloid-beta precursor protein). It probably represents a stabilizing cofactor for the presenilin homodimer that promotes the formation of a stable complex. Probably present in a minority of gamma-secretase complexes compared to APH1A. This chain is Gamma-secretase subunit APH-1B (APH1B), found in Pongo abelii (Sumatran orangutan).